Consider the following 248-residue polypeptide: AA9 family lytic polysaccharide monooxygenase G (248 aa).

The N-terminal stretch at 1–21 is a signal peptide; sequence MLPNAAGLLVAGVVSLSGVAA. H22 contributes to the Cu(2+) binding site. N58 carries an N-linked (GlcNAc...) asparagine glycan. C77 and C195 are oxidised to a cystine. Position 107 (H107) interacts with Cu(2+). Q190 is an O2 binding site. A Cu(2+)-binding site is contributed by Y192. N203 carries N-linked (GlcNAc...) asparagine glycosylation.

It belongs to the polysaccharide monooxygenase AA9 family. Cu(2+) serves as cofactor.

It is found in the secreted. It carries out the reaction [(1-&gt;4)-beta-D-glucosyl]n+m + reduced acceptor + O2 = 4-dehydro-beta-D-glucosyl-[(1-&gt;4)-beta-D-glucosyl]n-1 + [(1-&gt;4)-beta-D-glucosyl]m + acceptor + H2O.. In terms of biological role, lytic polysaccharide monooxygenase (LPMO) that depolymerizes crystalline and amorphous polysaccharides via the oxidation of scissile alpha- or beta-(1-4)-glycosidic bonds, yielding C1 or C4 oxidation products. Catalysis by LPMOs requires the reduction of the active-site copper from Cu(II) to Cu(I) by a reducing agent and H(2)O(2) or O(2) as a cosubstrate. The protein is AA9 family lytic polysaccharide monooxygenase G of Malbranchea cinnamomea (Thermophilic fungus).